Here is a 295-residue protein sequence, read N- to C-terminus: UDP-3-O-acyl-N-acetylglucosamine deacetylase (295 aa).

His77, His233, and Asp237 together coordinate Zn(2+). Catalysis depends on His260, which acts as the Proton donor.

Belongs to the LpxC family. Zn(2+) is required as a cofactor.

The enzyme catalyses a UDP-3-O-[(3R)-3-hydroxyacyl]-N-acetyl-alpha-D-glucosamine + H2O = a UDP-3-O-[(3R)-3-hydroxyacyl]-alpha-D-glucosamine + acetate. It functions in the pathway glycolipid biosynthesis; lipid IV(A) biosynthesis; lipid IV(A) from (3R)-3-hydroxytetradecanoyl-[acyl-carrier-protein] and UDP-N-acetyl-alpha-D-glucosamine: step 2/6. Functionally, catalyzes the hydrolysis of UDP-3-O-myristoyl-N-acetylglucosamine to form UDP-3-O-myristoylglucosamine and acetate, the committed step in lipid A biosynthesis. The protein is UDP-3-O-acyl-N-acetylglucosamine deacetylase of Solibacter usitatus (strain Ellin6076).